The sequence spans 320 residues: 4-diphosphocytidyl-2-C-methyl-D-erythritol kinase (320 aa).

Residue Lys20 is part of the active site. 112–122 (PVAGGMGGGSA) serves as a coordination point for ATP. Residue Asp154 is part of the active site.

This sequence belongs to the GHMP kinase family. IspE subfamily.

It catalyses the reaction 4-CDP-2-C-methyl-D-erythritol + ATP = 4-CDP-2-C-methyl-D-erythritol 2-phosphate + ADP + H(+). It functions in the pathway isoprenoid biosynthesis; isopentenyl diphosphate biosynthesis via DXP pathway; isopentenyl diphosphate from 1-deoxy-D-xylulose 5-phosphate: step 3/6. Catalyzes the phosphorylation of the position 2 hydroxy group of 4-diphosphocytidyl-2C-methyl-D-erythritol. In Arthrobacter sp. (strain FB24), this protein is 4-diphosphocytidyl-2-C-methyl-D-erythritol kinase.